Reading from the N-terminus, the 317-residue chain is Ribonuclease Z (317 aa).

Residues His-61, His-63, Asp-65, His-66, His-153, Asp-221, and His-280 each coordinate Zn(2+). Catalysis depends on Asp-65, which acts as the Proton acceptor.

It belongs to the RNase Z family. Homodimer. Zn(2+) is required as a cofactor.

The enzyme catalyses Endonucleolytic cleavage of RNA, removing extra 3' nucleotides from tRNA precursor, generating 3' termini of tRNAs. A 3'-hydroxy group is left at the tRNA terminus and a 5'-phosphoryl group is left at the trailer molecule.. In terms of biological role, zinc phosphodiesterase, which displays some tRNA 3'-processing endonuclease activity. Probably involved in tRNA maturation, by removing a 3'-trailer from precursor tRNA. This chain is Ribonuclease Z, found in Alkaliphilus oremlandii (strain OhILAs) (Clostridium oremlandii (strain OhILAs)).